The chain runs to 307 residues: Glycine--tRNA ligase alpha subunit (307 aa).

It belongs to the class-II aminoacyl-tRNA synthetase family. In terms of assembly, tetramer of two alpha and two beta subunits.

The protein resides in the cytoplasm. The enzyme catalyses tRNA(Gly) + glycine + ATP = glycyl-tRNA(Gly) + AMP + diphosphate. The chain is Glycine--tRNA ligase alpha subunit (glyQ) from Xylella fastidiosa (strain 9a5c).